Reading from the N-terminus, the 662-residue chain is MFNEKDQLAIDTIRALSIDAIEKANSGHPGLPMGAAPMAYTLWTRHLNFNPQSKDFFNRDRFILSAGHGSALLYSLLHVSGSLELEELKQFRQWGSKTPGHPEYRHTDGVEVTTGPLGQGFAMSVGMALAESHLAGKFNKDQFDIVNHYTYVLASDGDLMEGISHEAASFAGHNQLDKLIVLYDSNDISLDGDLDKSFSEDTKQRFEAYGWNYILVENGNDLDEIDNAITQAKSQQGPTIIEVKTIIGFGSPNKAGSNGVHGAPLGEEERALTFKEYGLDPEKRFNVPEDVYEIFKSTMLKRANENEEAWNNMLKNYSEAYPELAEEFKLAMSGKLPNNYADALPEYDLNHSGASRADSGEIIQKLSEFVPSFFGGSADLAGSNKSNVKEAKDYNKDTPEGKNVWFGVREFAMGAAINGMAAHGGLHPYAATFFVFSDYLKPALRLSSIMGLNSTFIFTHDSIAVGEDGPTHEPIEQLAGLRAIPNMNVIRPADGNETRVAWEVALESEQTPTSLVLTRQNLPTLDVDKQTVENGVRKGAYIVFETEQQLEYLLLASGSEVNLAVEAAKELEQQGKGVRVISMPNWYAFEQQSSEYKESILPSDVTKRIAIEMASPLGWHKYVGIEGKVIGINSFGASAPGDLVVEKYGFTKENILKQVRSL.

His28 is a substrate binding site. Residues His68 and 115-117 contribute to the thiamine diphosphate site; that span reads GPL. Residue Asp156 participates in Mg(2+) binding. Thiamine diphosphate-binding residues include Gly157 and Asn186. Positions 186 and 188 each coordinate Mg(2+). Residues His261, Arg356, and Ser383 each contribute to the substrate site. Thiamine diphosphate is bound at residue His261. The Proton donor role is filled by Glu410. Phe436 is a binding site for thiamine diphosphate. 3 residues coordinate substrate: His460, Asp468, and Arg519.

Belongs to the transketolase family. As to quaternary structure, homodimer. Mg(2+) serves as cofactor. Requires Ca(2+) as cofactor. Mn(2+) is required as a cofactor. The cofactor is Co(2+). It depends on thiamine diphosphate as a cofactor.

The catalysed reaction is D-sedoheptulose 7-phosphate + D-glyceraldehyde 3-phosphate = aldehydo-D-ribose 5-phosphate + D-xylulose 5-phosphate. The protein operates within carbohydrate biosynthesis; Calvin cycle. Its pathway is carbohydrate degradation; pentose phosphate pathway. Catalyzes the transfer of a two-carbon ketol group from a ketose donor to an aldose acceptor, via a covalent intermediate with the cofactor thiamine pyrophosphate. The chain is Transketolase (tkt) from Staphylococcus epidermidis (strain ATCC 35984 / DSM 28319 / BCRC 17069 / CCUG 31568 / BM 3577 / RP62A).